The following is a 367-amino-acid chain: Phosphoribosylaminoimidazole-succinocarboxamide synthase (367 aa).

It belongs to the SAICAR synthetase family.

The enzyme catalyses 5-amino-1-(5-phospho-D-ribosyl)imidazole-4-carboxylate + L-aspartate + ATP = (2S)-2-[5-amino-1-(5-phospho-beta-D-ribosyl)imidazole-4-carboxamido]succinate + ADP + phosphate + 2 H(+). It functions in the pathway purine metabolism; IMP biosynthesis via de novo pathway; 5-amino-1-(5-phospho-D-ribosyl)imidazole-4-carboxamide from 5-amino-1-(5-phospho-D-ribosyl)imidazole-4-carboxylate: step 1/2. The protein is Phosphoribosylaminoimidazole-succinocarboxamide synthase of Shewanella frigidimarina (strain NCIMB 400).